The following is a 462-amino-acid chain: Indoleacetamide hydrolase (462 aa).

Residues Lys-74 and Ser-149 each act as charge relay system in the active site. Ser-173 serves as the catalytic Acyl-ester intermediate.

It belongs to the amidase family.

It participates in plant hormone metabolism; auxin biosynthesis. In terms of biological role, hydrolyzes indole-3-acetamide (IAM) into indole-3-acetic acid (IAA). In Allorhizobium ampelinum (strain ATCC BAA-846 / DSM 112012 / S4) (Agrobacterium vitis (strain S4)), this protein is Indoleacetamide hydrolase (iaaH).